The following is a 311-amino-acid chain: N-acetylmuramic acid 6-phosphate etherase (311 aa).

One can recognise an SIS domain in the interval 66-230 (VVEAFEADGR…TTAAMVRLGK (165 aa)). The Proton donor role is filled by Glu94. Glu125 is a catalytic residue.

This sequence belongs to the GCKR-like family. MurNAc-6-P etherase subfamily. Homodimer.

The enzyme catalyses N-acetyl-D-muramate 6-phosphate + H2O = N-acetyl-D-glucosamine 6-phosphate + (R)-lactate. Its pathway is amino-sugar metabolism; N-acetylmuramate degradation. Its function is as follows. Specifically catalyzes the cleavage of the D-lactyl ether substituent of MurNAc 6-phosphate, producing GlcNAc 6-phosphate and D-lactate. The sequence is that of N-acetylmuramic acid 6-phosphate etherase from Salinibacter ruber (strain DSM 13855 / M31).